The chain runs to 248 residues: tRNA (guanine-N(1)-)-methyltransferase (248 aa).

Residues glycine 126 and 150-155 (LGDYVL) each bind S-adenosyl-L-methionine. Positions 224–248 (WRRTQQEERTRERRPDLWAAFDSED) are disordered. Positions 227 to 239 (TQQEERTRERRPD) are enriched in basic and acidic residues.

Belongs to the RNA methyltransferase TrmD family. Homodimer.

Its subcellular location is the cytoplasm. The catalysed reaction is guanosine(37) in tRNA + S-adenosyl-L-methionine = N(1)-methylguanosine(37) in tRNA + S-adenosyl-L-homocysteine + H(+). Its function is as follows. Specifically methylates guanosine-37 in various tRNAs. The polypeptide is tRNA (guanine-N(1)-)-methyltransferase (Micrococcus luteus (strain ATCC 4698 / DSM 20030 / JCM 1464 / CCM 169 / CCUG 5858 / IAM 1056 / NBRC 3333 / NCIMB 9278 / NCTC 2665 / VKM Ac-2230) (Micrococcus lysodeikticus)).